The primary structure comprises 425 residues: Oxytetracycline polyketide putative beta-ketoacyl synthase 1 (425 aa).

The region spanning 7 to 420 (ARRVVITGIG…GFQSAIVLTE (414 aa)) is the Ketosynthase family 3 (KS3) domain. Active-site for beta-ketoacyl synthase activity residues include Cys173, His313, and His350.

It belongs to the thiolase-like superfamily. Beta-ketoacyl-ACP synthases family.

The protein operates within antibiotic biosynthesis; oxytetracycline biosynthesis. The chain is Oxytetracycline polyketide putative beta-ketoacyl synthase 1 from Streptomyces rimosus.